A 60-amino-acid polypeptide reads, in one-letter code: MKAIIFLFAVLTVVAIIIPIISGEPNAGPHAASIDLNEIMKKITPDLLKMLDDIKTKIQG.

A signal peptide spans 1 to 23 (MKAIIFLFAVLTVVAIIIPIISG). The propeptide occupies 24–33 (EPNAGPHAAS). Glutamine 59 bears the Glutamine amide mark.

Belongs to the formicidae venom clade 2 family. As to expression, expressed by the venom gland.

It is found in the secreted. In terms of biological role, toxin that causes a rapid and irreversible paralysis when intrathoracically injected into insects (blowflies). Does not cause spontaneous nocifensive behaviors by intraplantar injection in mice. This chain is Myrmicitoxin(1)-Pr4c, found in Pogonomyrmex rugosus (Desert harvester ant).